Reading from the N-terminus, the 254-residue chain is Acetylglutamate kinase (254 aa).

Substrate is bound by residues 40–41, arginine 62, and asparagine 154; that span reads GG.

Belongs to the acetylglutamate kinase family. ArgB subfamily.

The protein resides in the cytoplasm. It carries out the reaction N-acetyl-L-glutamate + ATP = N-acetyl-L-glutamyl 5-phosphate + ADP. It participates in amino-acid biosynthesis; L-arginine biosynthesis; N(2)-acetyl-L-ornithine from L-glutamate: step 2/4. Catalyzes the ATP-dependent phosphorylation of N-acetyl-L-glutamate. The sequence is that of Acetylglutamate kinase from Staphylococcus aureus (strain Mu3 / ATCC 700698).